The primary structure comprises 380 residues: 3-isopropylmalate dehydratase large subunit (380 aa).

Positions 262, 320, and 323 each coordinate [4Fe-4S] cluster.

The protein belongs to the aconitase/IPM isomerase family. LeuC type 2 subfamily. As to quaternary structure, heterodimer of LeuC and LeuD. It depends on [4Fe-4S] cluster as a cofactor.

The enzyme catalyses (2R,3S)-3-isopropylmalate = (2S)-2-isopropylmalate. It functions in the pathway amino-acid biosynthesis; L-leucine biosynthesis; L-leucine from 3-methyl-2-oxobutanoate: step 2/4. In terms of biological role, catalyzes the isomerization between 2-isopropylmalate and 3-isopropylmalate, via the formation of 2-isopropylmaleate. This chain is 3-isopropylmalate dehydratase large subunit, found in Thermococcus kodakarensis (strain ATCC BAA-918 / JCM 12380 / KOD1) (Pyrococcus kodakaraensis (strain KOD1)).